The chain runs to 148 residues: Large ribosomal subunit protein uL15 (148 aa).

Residues 12 to 52 are disordered; that stretch reads ERKNRKRVGRGGGSGWGGTSGKGHKGQNARSGGGVPAWFEG. A compositionally biased stretch (gly residues) spans 21–32; that stretch reads RGGGSGWGGTSG.

It belongs to the universal ribosomal protein uL15 family. As to quaternary structure, part of the 50S ribosomal subunit.

Its function is as follows. Binds to the 23S rRNA. This is Large ribosomal subunit protein uL15 from Maridesulfovibrio salexigens (strain ATCC 14822 / DSM 2638 / NCIMB 8403 / VKM B-1763) (Desulfovibrio salexigens).